The primary structure comprises 1726 residues: Probable serine/threonine-protein kinase roco4 (1726 aa).

4 LRR repeats span residues lysine 256–methionine 277, histidine 280–leucine 301, serine 303–leucine 324, and aspartate 326–serine 347. Residues lysine 364–serine 544 enclose the Roc domain. GTP-binding positions include glycine 377–threonine 384, aspartate 428–glutamine 432, and threonine 487–aspartate 490. Residues alanine 591–leucine 787 form the COR domain. Residues serine 800–asparagine 881 are compositionally biased toward low complexity. Residues serine 800–threonine 890 are disordered. One can recognise a Protein kinase domain in the interval isoleucine 1026 to leucine 1292. ATP is bound by residues isoleucine 1032–valine 1040 and lysine 1055. Aspartate 1154 functions as the Proton acceptor in the catalytic mechanism. Polar residues predominate over residues alanine 1319–threonine 1331. The disordered stretch occupies residues alanine 1319–serine 1385. Residues asparagine 1332–asparagine 1348 are compositionally biased toward low complexity. Residues serine 1349–glutamine 1364 are compositionally biased toward polar residues. Over residues threonine 1365–serine 1381 the composition is skewed to low complexity. WD repeat units follow at residues serine 1422 to glutamate 1461, lysine 1463 to glutamine 1502, proline 1506 to serine 1546, lysine 1589 to lysine 1627, alanine 1633 to threonine 1670, and histidine 1674 to threonine 1714.

It belongs to the protein kinase superfamily. TKL Ser/Thr protein kinase family. ROCO subfamily.

It catalyses the reaction L-seryl-[protein] + ATP = O-phospho-L-seryl-[protein] + ADP + H(+). The enzyme catalyses L-threonyl-[protein] + ATP = O-phospho-L-threonyl-[protein] + ADP + H(+). The polypeptide is Probable serine/threonine-protein kinase roco4 (roco4) (Dictyostelium discoideum (Social amoeba)).